Consider the following 147-residue polypeptide: uncharacterized protein (147 aa).

2 disordered regions span residues 1–49 (MRTP…NLNE) and 125–147 (SPSP…RKSN). 2 stretches are compositionally biased toward low complexity: residues 8 to 49 (NNNY…NLNE) and 125 to 140 (SPSP…PQNT).

This is an uncharacterized protein from Dictyostelium discoideum (Social amoeba).